We begin with the raw amino-acid sequence, 177 residues long: Protein GrpE (177 aa).

A disordered region spans residues 1 to 26 (MSEEIKKDDLQEEVEATETEETVEEV). Positions 10–26 (LQEEVEATETEETVEEV) are enriched in acidic residues.

This sequence belongs to the GrpE family. Homodimer.

The protein localises to the cytoplasm. Functionally, participates actively in the response to hyperosmotic and heat shock by preventing the aggregation of stress-denatured proteins, in association with DnaK and GrpE. It is the nucleotide exchange factor for DnaK and may function as a thermosensor. Unfolded proteins bind initially to DnaJ; upon interaction with the DnaJ-bound protein, DnaK hydrolyzes its bound ATP, resulting in the formation of a stable complex. GrpE releases ADP from DnaK; ATP binding to DnaK triggers the release of the substrate protein, thus completing the reaction cycle. Several rounds of ATP-dependent interactions between DnaJ, DnaK and GrpE are required for fully efficient folding. The protein is Protein GrpE of Streptococcus agalactiae serotype Ia (strain ATCC 27591 / A909 / CDC SS700).